The sequence spans 837 residues: E3 ubiquitin-protein ligase bre-1 (837 aa).

A disordered region spans residues 1 to 33 (MMKRSNEGIGGENYASSPSDDGQQKRRKIQFEP). The interaction with ubc-1 stretch occupies residues 1 to 313 (MMKRSNEGIG…AKEIENLRLE (313 aa)). 2 coiled-coil regions span residues 54-89 (TSKL…ESNF) and 185-253 (HKEL…KHMR). Positions 269-302 (GQSGGNGGATPSSSGTTNATEKKISAPDIPPSET) are disordered. A compositionally biased stretch (polar residues) spans 277–287 (ATPSSSGTTNA). Coiled-coil stretches lie at residues 300 to 397 (SETA…AFRS), 458 to 651 (DEMK…KAQT), and 677 to 763 (VQFK…NESV). Residues 785–824 (CPSCKTRPKDCIMLKCYHLFCETCIKTMYDTRQRKCPKCN) form an RING-type zinc finger.

The protein belongs to the BRE1 family. Interacts with ubc-1. Interacts with mrg-1. In adult animals, expressed in oocytes, germ cells, pharyngeal and intestinal cells.

The protein localises to the nucleus. It carries out the reaction S-ubiquitinyl-[E2 ubiquitin-conjugating enzyme]-L-cysteine + [acceptor protein]-L-lysine = [E2 ubiquitin-conjugating enzyme]-L-cysteine + N(6)-ubiquitinyl-[acceptor protein]-L-lysine.. It participates in protein modification; protein ubiquitination. Functionally, E3 ubiquitin-protein ligase that mediates monoubiquitination of 'Lys-117' of histone H2B. H2B 'Lys-117' ubiquitination gives a specific tag for epigenetic transcriptional activation and is also prerequisite for histone H3 'Lys-4' and 'Lys-79' methylation. Involved in regulating stem cell proliferative fate. The chain is E3 ubiquitin-protein ligase bre-1 (rfp-1) from Caenorhabditis elegans.